Reading from the N-terminus, the 229-residue chain is Peptidase E (229 aa).

Residues S120, D135, and H157 each act as charge relay system in the active site.

The protein belongs to the peptidase S51 family.

Its subcellular location is the cytoplasm. The catalysed reaction is Dipeptidase E catalyzes the hydrolysis of dipeptides Asp-|-Xaa. It does not act on peptides with N-terminal Glu, Asn or Gln, nor does it cleave isoaspartyl peptides.. In terms of biological role, hydrolyzes dipeptides containing N-terminal aspartate residues. May play a role in allowing the cell to use peptide aspartate to spare carbon otherwise required for the synthesis of the aspartate family of amino acids. The protein is Peptidase E of Shigella boydii serotype 18 (strain CDC 3083-94 / BS512).